Reading from the N-terminus, the 1140-residue chain is MSSYIERIEAHNFKSFRRKKVINFTKGLNVISGPNGSGKSNIGDMLLFVLGTKSIHAVRADRLSDLVSKGSGNECSVSVTFRSDDGRSLVIERRLVIEDEPKSYYYVNGVRSRLSEIDETLASMGINFGTYSFVLQGDINDFISYSGQERRKLIERISGVDQFDSEIERVKADIEAVSRNMEINQTIIDEKRQNLERLRTEKEKKERYDALLKRKRDVEYTEILNRKNAMERQKRTIEGQISDLTKEIAQLEERRSDLEKRSEAIRIRREDVAKRIDDLTSGEMNRVKTDLHSVEVDIAKIRGIIDEKNRNMEKLEETIAKYESERDSTDREIEDLDRQIEEKAKRKRALEDRYADLKKRYDDLFSRAQAEAVDAAETRRKSKEYQEKIDGLGREIEELKAAGSQMNADLAVLLQKKAALEERKEDLDLKIRTSEWKAKETSEDMGKYSRKYYDLKAKYDQINDRISDLKSEISEKEASAKIASSRVPEYVRNVKMLEESVEGVIGLVRDLISYGEKYVKAVESAGGGRLNAVVVKDDAVAKECIQILKDRKISPMTFLPLNKMRDPPAQRDVGKISKDPGYLGILMDFVDFEDQYRSAVYYAIRDTILVQDIDAGRRLMGIFRLVTLDGDIFDPGGSITGGYRNYASDYASALRMQHDLEGMKIQLSSLMDDRSRIKREMDQAFSEMSEASRRTGEIMKEQEMLKKEAERSREELKQVMDDISSTDRAIADKKRMIDENEKVIEQKTLDLHKYQEALNDLYDRIDPEFFKNIGDLSNEINEVRSEIDAVASELNQITSRRDILSSERKHLEDQMIDTKLQENSIAAEIDDLNGKKRELEEKAKKYQYALNDLEGRYGNLSAQVREADKQIREMENGINDAKASIDLKNDLMNDLKVKAGILEGNLSSIERELSSYSGCEAVIGDLQAMRQEIERAIMDLGEINNAAPQQYEDALKDLDDYEKKHEKLMEEKKALEETTAMLNEKKREVFVKTFTDISEKMNYVYGIINGGTAKLIMIGSDPLTSSVEVSVTPKDKATVKIQALSGGEKSVAALSFITAVQILMPSSIYFLDEVDMYLDAYNAENMIKMISQNAGEAQTIVISLKSLVFSYASNAIGVTSVNGESFVFNGHFDGSPEAAP.

34–41 contacts ATP; the sequence is PNGSGKSN. Positions 160–484 form a coiled coil; it reads VDQFDSEIER…EKEASAKIAS (325 aa). One can recognise an SMC hinge domain in the interval 502–619; it reads EGVIGLVRDL…VQDIDAGRRL (118 aa). The stretch at 660 to 990 forms a coiled coil; that stretch reads LEGMKIQLSS…MLNEKKREVF (331 aa).

Belongs to the SMC family. As to quaternary structure, homodimer.

It localises to the cytoplasm. In terms of biological role, required for chromosome condensation and partitioning. The protein is Chromosome partition protein Smc of Thermoplasma acidophilum (strain ATCC 25905 / DSM 1728 / JCM 9062 / NBRC 15155 / AMRC-C165).